Here is an 822-residue protein sequence, read N- to C-terminus: Serine/threonine-protein phosphatase 4 regulatory subunit 3 (822 aa).

The 100-residue stretch at 1-100 (MTDTRRRVKV…DEIWEKICQV (100 aa)) folds into the WH1 domain. Residues 744 to 822 (TSQLSASGHP…PLTKKARLGS (79 aa)) are disordered. Positions 761–774 (SPGSPESPGSVSKS) are enriched in low complexity. The segment covering 793–808 (YPDDDEEDDDNDEEEK) has biased composition (acidic residues).

Belongs to the SMEK family. As to quaternary structure, serine/threonine-protein phosphatase 4 (PP4) occurs in different assemblies of the catalytic and one or more regulatory subunits.

Regulatory subunit of serine/threonine-protein phosphatase 4. This chain is Serine/threonine-protein phosphatase 4 regulatory subunit 3 (smek1), found in Xenopus laevis (African clawed frog).